Reading from the N-terminus, the 664-residue chain is Probable LRR receptor-like serine/threonine-protein kinase At1g63430 (664 aa).

The N-terminal stretch at 1–22 (MRSKYFCSLALVLGLFFVSCDG) is a signal peptide. Residues 23 to 288 (FASNEVQALR…KHHRASKPKW (266 aa)) lie on the Extracellular side of the membrane. N75 carries N-linked (GlcNAc...) asparagine glycosylation. 4 LRR repeats span residues 94–116 (YLQELILHGNILIGTIPKEIGNL), 118–140 (NLKILDLGNNHLMGPIPAEIGSL), 142–165 (GIMIINLQSNGLTGKLPAELGNLK), and 166–178 (YLRELHIDRNRLQ). Residue N197 is glycosylated (N-linked (GlcNAc...) asparagine). The chain crosses the membrane as a helical span at residues 289–309 (LLALEIVTGSMVGLLLLVALF). The Cytoplasmic segment spans residues 310 to 664 (SAVHRWNNRS…LAWAELALDS (355 aa)). The Protein kinase domain occupies 360–642 (EDFSNIIGLS…ELCETLESRI (283 aa)).

This sequence belongs to the protein kinase superfamily. Ser/Thr protein kinase family.

The protein localises to the cell membrane. It carries out the reaction L-seryl-[protein] + ATP = O-phospho-L-seryl-[protein] + ADP + H(+). The enzyme catalyses L-threonyl-[protein] + ATP = O-phospho-L-threonyl-[protein] + ADP + H(+). In Arabidopsis thaliana (Mouse-ear cress), this protein is Probable LRR receptor-like serine/threonine-protein kinase At1g63430.